The primary structure comprises 223 residues: uncharacterized protein (223 aa).

This sequence to M.jannaschii MJ1453.

This is an uncharacterized protein from Methanothermobacter thermautotrophicus (strain ATCC 29096 / DSM 1053 / JCM 10044 / NBRC 100330 / Delta H) (Methanobacterium thermoautotrophicum).